The sequence spans 71 residues: Protein CYSTEINE-RICH TRANSMEMBRANE MODULE 8 (71 aa).

Polar residues predominate over residues 1 to 22 (MNQSAQNYFSVQKPSETSSGPY). Residues 1–35 (MNQSAQNYFSVQKPSETSSGPYTSPPPIGYPTRDA) are disordered. A helical transmembrane segment spans residues 48–64 (NSKGVNPEGCCAAICCC).

The protein belongs to the CYSTM1 family. Mostly expressed in stems, siliques, roots and flowers and, to a lower extent, in leaves.

It is found in the membrane. The protein localises to the nucleus. Involved in resistance to abiotic stress. This is Protein CYSTEINE-RICH TRANSMEMBRANE MODULE 8 from Arabidopsis thaliana (Mouse-ear cress).